Consider the following 187-residue polypeptide: ATP synthase subunit delta (187 aa).

Belongs to the ATPase delta chain family. F-type ATPases have 2 components, F(1) - the catalytic core - and F(0) - the membrane proton channel. F(1) has five subunits: alpha(3), beta(3), gamma(1), delta(1), epsilon(1). F(0) has three main subunits: a(1), b(2) and c(10-14). The alpha and beta chains form an alternating ring which encloses part of the gamma chain. F(1) is attached to F(0) by a central stalk formed by the gamma and epsilon chains, while a peripheral stalk is formed by the delta and b chains.

Its subcellular location is the cell membrane. Its function is as follows. F(1)F(0) ATP synthase produces ATP from ADP in the presence of a proton or sodium gradient. F-type ATPases consist of two structural domains, F(1) containing the extramembraneous catalytic core and F(0) containing the membrane proton channel, linked together by a central stalk and a peripheral stalk. During catalysis, ATP synthesis in the catalytic domain of F(1) is coupled via a rotary mechanism of the central stalk subunits to proton translocation. Functionally, this protein is part of the stalk that links CF(0) to CF(1). It either transmits conformational changes from CF(0) to CF(1) or is implicated in proton conduction. The protein is ATP synthase subunit delta of Mesomycoplasma hyopneumoniae (strain J / ATCC 25934 / NCTC 10110) (Mycoplasma hyopneumoniae).